Reading from the N-terminus, the 142-residue chain is Large ribosomal subunit protein uL11 (142 aa).

It belongs to the universal ribosomal protein uL11 family. In terms of assembly, part of the ribosomal stalk of the 50S ribosomal subunit. Interacts with L10 and the large rRNA to form the base of the stalk. L10 forms an elongated spine to which L12 dimers bind in a sequential fashion forming a multimeric L10(L12)X complex. Post-translationally, one or more lysine residues are methylated.

Its function is as follows. Forms part of the ribosomal stalk which helps the ribosome interact with GTP-bound translation factors. This is Large ribosomal subunit protein uL11 from Acidithiobacillus ferrooxidans (strain ATCC 23270 / DSM 14882 / CIP 104768 / NCIMB 8455) (Ferrobacillus ferrooxidans (strain ATCC 23270)).